The primary structure comprises 227 residues: Mitochondrial cardiolipin hydrolase (227 aa).

Topologically, residues 1–14 (MDVFKQMSFKELMK) are mitochondrial intermembrane. A helical transmembrane segment spans residues 15 to 33 (VLGLGTVAFVLGVEWLNWL). Over 34 to 227 (TRRLRDSRGP…LQSKNGQIKK (194 aa)) the chain is Cytoplasmic. In terms of domain architecture, PLD phosphodiesterase spans 153–180 (SAVHMHHKFALVDGRKLISGSLNWTLTA). Catalysis depends on residues His-158, Lys-160, and Asp-165.

The protein belongs to the phospholipase D family. MitoPLD/Zucchini subfamily. As to quaternary structure, homodimer.

The protein localises to the mitochondrion outer membrane. It catalyses the reaction a cardiolipin + H2O = a 1,2-diacyl-sn-glycero-3-phospho-(1'-sn-glycerol) + a 1,2-diacyl-sn-glycero-3-phosphate + H(+). Presents phospholipase and nuclease activities, depending on the different physiological conditions. Plays a key role in mitochondrial fusion and fission via its phospholipase activity. In its phospholipase role, it uses the mitochondrial lipid cardiolipin as substrate to generate phosphatidate (PA or 1,2-diacyl-sn-glycero-3-phosphate), a second messenger signaling lipid. Production of PA facilitates Mitofusin-mediated fusion, whereas the cleavage of PA by the Lipin family of phosphatases produces diacylgycerol (DAG) which promotes mitochondrial fission. Regulates mitochondrial shape through facilitating mitochondrial fusion. During spermatogenesis, plays a critical role in PIWI-interacting RNA (piRNA) biogenesis. piRNAs provide essential protection against the activity of mobile genetic elements. piRNA-mediated transposon silencing is thus critical for maintaining genome stability, in particular in germline cells when transposons are mobilized as a consequence of wide-spread genomic demethylation. Has been shown to be a backbone-non-specific, single strand-specific nuclease, cleaving either RNA or DNA substrates with similar affinity. Produces 5' phosphate and 3' hydroxyl termini, suggesting it could directly participate in the processing of primary piRNA transcripts. Has been proposed to act as a cardiolipin hydrolase to generate phosphatidic acid at mitochondrial surface. Although it cannot be excluded that it can act as a phospholipase in some circumstances, this activity could not be confirmed. The sequence is that of Mitochondrial cardiolipin hydrolase (pld6) from Danio rerio (Zebrafish).